A 936-amino-acid chain; its full sequence is Protocadherin alpha-5 (936 aa).

Residues 1–28 (MVYSRRGSLGSRLLLLWLLLAYWKAGSG) form the signal peptide. Residues 29–696 (QLHYSIPEEA…GPEAALVDVN (668 aa)) are Extracellular-facing. 6 consecutive Cadherin domains span residues 33 to 132 (SIPE…PPRF), 156 to 241 (ASDL…APEF), 242 to 349 (DKSI…TPEM), 350 to 454 (AITT…APAF), 455 to 564 (AQPQ…APAL), and 580 to 677 (VPRS…APKA). Asparagine 264 carries N-linked (GlcNAc...) asparagine glycosylation. The N-linked (GlcNAc...) asparagine glycan is linked to asparagine 547. The chain crosses the membrane as a helical span at residues 697 to 717 (VYLIIAICAVSSLLVLTLLLY). The Cytoplasmic portion of the chain corresponds to 718–936 (TALRCSAQPT…GNSTTDNSDQ (219 aa)). 2 disordered regions span residues 759–793 (SGEAPPKTDLMAFSPSLPQGPTSTDNPRQPNPDWR) and 816–936 (AGPG…NSDQ). 5 PXXP repeats span residues 773–776 (PSLP), 785–788 (PRQP), 818–821 (PGGP), 873–876 (KFII), and 877–890 (PGSPAIISIRQEPT). Residues 773–890 (PSLPQGPTST…AIISIRQEPT (118 aa)) are 5 X 4 AA repeats of P-X-X-P. Polar residues predominate over residues 774–786 (SLPQGPTSTDNPR). Over residues 895–909 (DKSDFITFGKKEETK) the composition is skewed to basic and acidic residues.

It localises to the cell membrane. Its function is as follows. Potential calcium-dependent cell-adhesion protein. May be involved in the establishment and maintenance of specific neuronal connections in the brain. The polypeptide is Protocadherin alpha-5 (PCDHA5) (Homo sapiens (Human)).